A 129-amino-acid polypeptide reads, in one-letter code: Small ribosomal subunit protein uS8mz (129 aa).

This sequence belongs to the universal ribosomal protein uS8 family. Component of the mitochondrial ribosome small subunit.

Its subcellular location is the mitochondrion. The polypeptide is Small ribosomal subunit protein uS8mz (RPS15AB) (Arabidopsis thaliana (Mouse-ear cress)).